We begin with the raw amino-acid sequence, 286 residues long: Fructose-bisphosphate aldolase (286 aa).

Position 50 (Ser50) interacts with D-glyceraldehyde 3-phosphate. Asp85 acts as the Proton donor in catalysis. Residues His86, Asp107, Glu137, and His181 each coordinate Zn(2+). Gly182 is a binding site for dihydroxyacetone phosphate. Residue His209 coordinates Zn(2+). Dihydroxyacetone phosphate-binding positions include 210-212 (GGT) and 231-234 (NVNT).

Belongs to the class II fructose-bisphosphate aldolase family. The cofactor is Zn(2+).

The catalysed reaction is beta-D-fructose 1,6-bisphosphate = D-glyceraldehyde 3-phosphate + dihydroxyacetone phosphate. It functions in the pathway carbohydrate degradation; glycolysis; D-glyceraldehyde 3-phosphate and glycerone phosphate from D-glucose: step 4/4. Functionally, catalyzes the aldol condensation of dihydroxyacetone phosphate (DHAP or glycerone-phosphate) with glyceraldehyde 3-phosphate (G3P) to form fructose 1,6-bisphosphate (FBP) in gluconeogenesis and the reverse reaction in glycolysis. This is Fructose-bisphosphate aldolase (fba) from Staphylococcus aureus (strain MSSA476).